The sequence spans 155 residues: Probable calcium-binding protein CML9 (155 aa).

EF-hand domains follow at residues 8–43, 86–121, and 122–155; these read EQVD…LGQN, ATEK…HGDR, and LTEE…MNNK. Residues Asp21, Asp23, Asp25, Arg27, and Glu32 each contribute to the Ca(2+) site.

In terms of biological role, potential calcium sensor. In Oryza sativa subsp. japonica (Rice), this protein is Probable calcium-binding protein CML9 (CML9).